A 233-amino-acid chain; its full sequence is Flagellar calcium-binding protein TB-17 (233 aa).

Over residues 1-11 (MGCSGSKNASN) the composition is skewed to polar residues. Residues 1–29 (MGCSGSKNASNPKDGAASKGGKDGKTTAD) form a disordered region. Over residues 20–29 (GGKDGKTTAD) the composition is skewed to basic and acidic residues. EF-hand domains are found at residues 48–83 (ESKSRRIELFKQFDTNGTGKLGFREVLDGCYSILKL), 130–165 (YDIFELTVIFDTMDKDGSLLLELHEFKEALPKLKEW), and 167–202 (VDITDATTVFNEIDTNGSGVVTFDEFSCWAVTKKLQ). Residues D61, N63, T65, K67, E72, D143, D145, S147, E154, D180, N182, S184, and E191 each coordinate Ca(2+). The segment at 203 to 233 (VSGDPDDEENGANEGDGANAGDGVPAAEGSA) is disordered. Low complexity predominate over residues 214–225 (ANEGDGANAGDG).

The protein belongs to the calflagin family.

The protein resides in the cell projection. Its subcellular location is the cilium. It localises to the flagellum. May contribute to the rapid motility of the trypanosomes, playing a role either in flagellar structure or in calcium metabolism. Could alternate between a GDP-bound inactive form to a calcium/GTP-bound active form. In Trypanosoma brucei brucei, this protein is Flagellar calcium-binding protein TB-17 (FCABP).